The chain runs to 274 residues: MNNPWLVALTTIFVWWFSTGAILWRIRRADLSGRAAHMRSVVGGLPLLIGGYIAMANSADDSSVRGAHVAFLSAVSVWGWFELAFLSGVVAGPNRDHCPPFASMTERFLRSVGTLLWHEIGLISALILCAVLVWTGENHFGLWTFATLFFARVSAKLNLFLGVPRINTQFLPKPLAHLASHFRHARMNFLFPVSITVLTFATGCWMERAADAQTDGIFIGFVLLTVLTALALLEHWFMVLPLPDQKLWTWMLPSVEDPAETVAEPVPGRIPVGE.

This is an uncharacterized protein from Rhodobacter capsulatus (Rhodopseudomonas capsulata).